The following is a 348-amino-acid chain: Xaa-Pro dipeptidase (348 aa).

The Co(2+) site is built by Asp-209, Asp-220, His-284, Glu-313, and Glu-327.

It belongs to the peptidase M24B family. Archaeal-type prolidase subfamily. Homodimer. Co(2+) serves as cofactor. It depends on Mn(2+) as a cofactor.

The protein resides in the cytoplasm. The catalysed reaction is Xaa-L-Pro dipeptide + H2O = an L-alpha-amino acid + L-proline. In terms of biological role, splits dipeptides with a prolyl in the C-terminal position and a nonpolar amino acid at the N-terminal position. In Pyrococcus furiosus (strain ATCC 43587 / DSM 3638 / JCM 8422 / Vc1), this protein is Xaa-Pro dipeptidase (pepQ).